Reading from the N-terminus, the 220-residue chain is MAKNRFNQSWLHDHINDPYVKMAQREGYRARAAYKLKEIDEQDKLIRPGQVIVDLGAAPGSWSQYARNKLAQGRRRDAVREGGIDGTIIALDMLPMEPIADVHFIQGDFREETVLHQLEEVLAGRSVDLVISDMAPNLSGVAVADAARIEHVCDLALEFAQNHLKPDGALLVKCFHGSGYSQIVEKFKHQFKTVAPRKPKASRDKSSETFILGRHLKLPR.

Positions 60, 62, 92, 108, and 133 each coordinate S-adenosyl-L-methionine. K173 serves as the catalytic Proton acceptor.

It belongs to the class I-like SAM-binding methyltransferase superfamily. RNA methyltransferase RlmE family.

It localises to the cytoplasm. The enzyme catalyses uridine(2552) in 23S rRNA + S-adenosyl-L-methionine = 2'-O-methyluridine(2552) in 23S rRNA + S-adenosyl-L-homocysteine + H(+). Its function is as follows. Specifically methylates the uridine in position 2552 of 23S rRNA at the 2'-O position of the ribose in the fully assembled 50S ribosomal subunit. The sequence is that of Ribosomal RNA large subunit methyltransferase E from Burkholderia thailandensis (strain ATCC 700388 / DSM 13276 / CCUG 48851 / CIP 106301 / E264).